A 245-amino-acid polypeptide reads, in one-letter code: 1-(5-phosphoribosyl)-5-[(5-phosphoribosylamino)methylideneamino] imidazole-4-carboxamide isomerase (245 aa).

D8 functions as the Proton acceptor in the catalytic mechanism. The active-site Proton donor is D130.

This sequence belongs to the HisA/HisF family.

It localises to the cytoplasm. The enzyme catalyses 1-(5-phospho-beta-D-ribosyl)-5-[(5-phospho-beta-D-ribosylamino)methylideneamino]imidazole-4-carboxamide = 5-[(5-phospho-1-deoxy-D-ribulos-1-ylimino)methylamino]-1-(5-phospho-beta-D-ribosyl)imidazole-4-carboxamide. Its pathway is amino-acid biosynthesis; L-histidine biosynthesis; L-histidine from 5-phospho-alpha-D-ribose 1-diphosphate: step 4/9. The polypeptide is 1-(5-phosphoribosyl)-5-[(5-phosphoribosylamino)methylideneamino] imidazole-4-carboxamide isomerase (Marinobacter nauticus (strain ATCC 700491 / DSM 11845 / VT8) (Marinobacter aquaeolei)).